A 419-amino-acid chain; its full sequence is MAEAGVEILCVGTELLLGDILNGNARWIAERLAGLGLPHYRQTVVGDNRQRLAAAAREASGRCRVLITTGGLGPTPDDLTTESLAAAFETPLEERPELWDEIQANLSAGGRAVAPSNRRQAFLPRGAAVLPNPLGSAPGMIWSPLPDFTILTFPGVPSEMRAMFEATAEPWLRRHGGATGVFVSRLLRFSGIGESNLAEQVADLLEGVNPTVAPYASLGDVKLRLTACGSSAESAAALLDPVEAELRRRTAQHCYGTTDDSLASVVLALLQRSGQTLSVAESCTGGGLGAALTAVPGSSAVFAGGVIAYSNAVKQQLLDVPAELLERHGAVSDPVVAAMAEGARQRLGTDWSIAVSGIAGPGGGTDEKPVGLVHLAVSGPDGCEATAERFGDRRGRGAVQQLTVIRALDRLRRRLLAQS.

This sequence belongs to the CinA family.

The sequence is that of CinA-like protein from Parasynechococcus marenigrum (strain WH8102).